Consider the following 411-residue polypeptide: Peptidase T (411 aa).

His78 serves as a coordination point for Zn(2+). Asp80 is an active-site residue. Asp140 is a binding site for Zn(2+). Glu173 (proton acceptor) is an active-site residue. Glu174, Asp196, and His379 together coordinate Zn(2+).

The protein belongs to the peptidase M20B family. Zn(2+) serves as cofactor.

The protein resides in the cytoplasm. It catalyses the reaction Release of the N-terminal residue from a tripeptide.. In terms of biological role, cleaves the N-terminal amino acid of tripeptides. This Yersinia pseudotuberculosis serotype O:1b (strain IP 31758) protein is Peptidase T.